A 91-amino-acid polypeptide reads, in one-letter code: Sec-independent protein translocase protein TatA (91 aa).

The chain crosses the membrane as a helical span at residues 2–22 (ANLGFPELVLIAVVILVLFGW). The span at 43–55 (VSEMKNDGAEAEK) shows a compositional bias: basic and acidic residues. The interval 43 to 91 (VSEMKNDGAEAEKTSAASTKTDEITSVSSTDTPQPTVTVESKDEKKHPA) is disordered. A compositionally biased stretch (polar residues) spans 57-81 (SAASTKTDEITSVSSTDTPQPTVTV). Positions 82–91 (ESKDEKKHPA) are enriched in basic and acidic residues.

This sequence belongs to the TatA/E family. As to quaternary structure, the Tat system comprises two distinct complexes: a TatABC complex, containing multiple copies of TatA, TatB and TatC subunits, and a separate TatA complex, containing only TatA subunits. Substrates initially bind to the TatABC complex, which probably triggers association of the separate TatA complex to form the active translocon.

It is found in the cell membrane. Functionally, part of the twin-arginine translocation (Tat) system that transports large folded proteins containing a characteristic twin-arginine motif in their signal peptide across membranes. TatA could form the protein-conducting channel of the Tat system. This chain is Sec-independent protein translocase protein TatA, found in Corynebacterium kroppenstedtii (strain DSM 44385 / JCM 11950 / CIP 105744 / CCUG 35717).